A 656-amino-acid polypeptide reads, in one-letter code: Transcription factor CPH1 (656 aa).

Residues 44–154 (NQVIRRYYLN…NVPHDKLMAD (111 aa)) mediate DNA binding. The span at 205–242 (DAATSSTSNTATTLTDTGVSSGLNNTTSGGGSDSATST) shows a compositional bias: low complexity. 2 disordered regions span residues 205–289 (DAAT…ANSD) and 575–656 (QQQQ…QSQT). Positions 243 to 267 (HNNNEASTKPSNGSEKSSPEYTTTA) are enriched in polar residues. Composition is skewed to low complexity over residues 575 to 586 (QQQQQQQQQQQQ) and 600 to 609 (SFNNNKSLSS). The span at 628–642 (KTSYGSLNDVVNSKV) shows a compositional bias: polar residues. Residues 646–656 (INKEEVKQSQT) are compositionally biased toward basic and acidic residues.

It belongs to the STE12 transcription factor family.

Its subcellular location is the nucleus. Functionally, transcription factor involved in the formation of pseudohyphae and hyphae. It is likely to play a role in the developmental switch between yeast and mycelial forms. May be involved in a signal transduction system, strengthening the possibility of a sexual phase up to now undetected, and similar to that of the yeast mating pathway. The chain is Transcription factor CPH1 (CPH1) from Candida albicans (strain SC5314 / ATCC MYA-2876) (Yeast).